We begin with the raw amino-acid sequence, 1097 residues long: UPF0746 protein DDB_G0281095 (1097 aa).

The segment covering 1–11 (MVNNNKRKEIE) has biased composition (basic and acidic residues). The tract at residues 1–24 (MVNNNKRKEIENQENDNDDDNDGL) is disordered. Acidic residues predominate over residues 12–22 (NQENDNDDDND). The region spanning 35–69 (YDSIRSKELQTIAKSLGLPNNGKKQEVYKRIEGYF) is the SAP domain. Residues 329–521 (FKEIREIHQQ…QLILELNEIQ (193 aa)) adopt a coiled-coil conformation.

This sequence belongs to the UPF0746 family.

The sequence is that of UPF0746 protein DDB_G0281095 from Dictyostelium discoideum (Social amoeba).